Reading from the N-terminus, the 396-residue chain is Cystathionine beta-lyase (396 aa).

N6-(pyridoxal phosphate)lysine is present on lysine 214.

This sequence belongs to the trans-sulfuration enzymes family. As to quaternary structure, homodimer. Pyridoxal 5'-phosphate is required as a cofactor.

The protein localises to the cytoplasm. The catalysed reaction is L,L-cystathionine + H2O = L-homocysteine + pyruvate + NH4(+). It catalyses the reaction an S-substituted L-cysteine + H2O = a thiol + pyruvate + NH4(+). It functions in the pathway amino-acid biosynthesis; L-methionine biosynthesis via de novo pathway; L-homocysteine from L-cystathionine: step 1/1. Its function is as follows. Catalyzes the cleavage of cystathionine to homocysteine, pyruvate and ammonia during methionine biosynthesis. Also has cytotoxic activity toward osteogenic, osteosarcoma and tracheal cells, in vitro. The chemical basis for cell toxicity might be the formation and subsequent transfer of sulfane-sulfur to proteins, derived via beta-cystathionase cleavage of L-cystine. This chain is Cystathionine beta-lyase (metC), found in Bordetella avium.